The sequence spans 601 residues: Glutathione-regulated potassium-efflux system protein KefB (601 aa).

13 helical membrane-spanning segments follow: residues 4–24 (SDFLLAGVLFLFAAVAAVPLA), 29–49 (IGAVLGYLLAGIAIGPWGLGF), 55–75 (EILHFSELGVVFLMFIIGLEL), 87–107 (IFGVGAAQVLLSAALLAGLLM), 115–135 (AAVVGGIGLAMSSTAMALQLM), 152–172 (VLLFQDLAVIPALALVPLLAG), 177–197 (HFDWMKIGMKVLAFVGMLIGG), 207–227 (FIAASGVREVFTAATLLLVLG), 230–250 (LFMDALGLSMALGTFIAGVLL), 268–288 (GLLLGLFFISVGMSLNLGVLY), 291–311 (LLWVVISVVVLVAVKILVLYL), 324–344 (MQFAGVLSQGGEFAFVLFSTA), and 356–376 (ALLLVTVTLSMMTTPLLMKLV). One can recognise an RCK N-terminal domain in the interval 400–519 (KPQVIVVGFG…AGVTQFSRET (120 aa)).

This sequence belongs to the monovalent cation:proton antiporter 2 (CPA2) transporter (TC 2.A.37) family. KefB subfamily. As to quaternary structure, interacts with the regulatory subunit KefG.

Its subcellular location is the cell inner membrane. Functionally, pore-forming subunit of a potassium efflux system that confers protection against electrophiles. Catalyzes K(+)/H(+) antiport. The protein is Glutathione-regulated potassium-efflux system protein KefB of Shigella sonnei (strain Ss046).